The sequence spans 63 residues: Cecropin-2 (63 aa).

Positions 1–21 are cleaved as a signal peptide; sequence MNFNKVLVLLAVIFAVFAGQT. Positions 22–23 are excised as a propeptide; the sequence is EA. Lys62 carries the post-translational modification Lysine amide.

It belongs to the cecropin family.

The protein resides in the secreted. Cecropins have lytic and antibacterial activity against several Gram-positive and Gram-negative bacteria. The protein is Cecropin-2 (CEC2) of Ceratitis capitata (Mediterranean fruit fly).